We begin with the raw amino-acid sequence, 112 residues long: Cytochrome c type-1 (112 aa).

4 residues coordinate heme c: Cys-20, Cys-23, His-24, and Met-85.

In terms of processing, binds 1 heme c group covalently per subunit.

The protein resides in the mitochondrion intermembrane space. Its function is as follows. Electron carrier between complex III (ubiquinol-cytochrome c oxireductase) and complex IV (cytochrome c oxidase). The sequence is that of Cytochrome c type-1 from Ascaris suum (Pig roundworm).